Reading from the N-terminus, the 299-residue chain is Nucleotide-binding protein SAV_6292 (299 aa).

Position 23–30 (23–30 (GMSGAGRS)) interacts with ATP. 74-77 (DVRG) contributes to the GTP binding site.

This sequence belongs to the RapZ-like family.

In terms of biological role, displays ATPase and GTPase activities. In Streptomyces avermitilis (strain ATCC 31267 / DSM 46492 / JCM 5070 / NBRC 14893 / NCIMB 12804 / NRRL 8165 / MA-4680), this protein is Nucleotide-binding protein SAV_6292.